The primary structure comprises 485 residues: Glutamyl-tRNA(Gln) amidotransferase subunit A (485 aa).

Residues lysine 78 and serine 153 each act as charge relay system in the active site. Serine 177 serves as the catalytic Acyl-ester intermediate.

This sequence belongs to the amidase family. GatA subfamily. As to quaternary structure, heterotrimer of A, B and C subunits.

The catalysed reaction is L-glutamyl-tRNA(Gln) + L-glutamine + ATP + H2O = L-glutaminyl-tRNA(Gln) + L-glutamate + ADP + phosphate + H(+). Allows the formation of correctly charged Gln-tRNA(Gln) through the transamidation of misacylated Glu-tRNA(Gln) in organisms which lack glutaminyl-tRNA synthetase. The reaction takes place in the presence of glutamine and ATP through an activated gamma-phospho-Glu-tRNA(Gln). This chain is Glutamyl-tRNA(Gln) amidotransferase subunit A, found in Bacillus cereus (strain G9842).